The primary structure comprises 390 residues: Fluoride export protein 1 (390 aa).

The disordered stretch occupies residues 1–22 (MVAPLVSESQSSSIEETDEQQQ). The Cytoplasmic segment spans residues 1 to 72 (MVAPLVSESQ…RFLDKTQKYY (72 aa)). Residues 73-93 (PVILNIVHGAIWGVLVRKGLM) traverse the membrane as a helical segment. Topologically, residues 94-100 (SLTTYSG) are extracellular. The helical transmembrane segment at 101 to 121 (SFLSGVIWANFAACVVMGLAI) threads the bilayer. The Cytoplasmic portion of the chain corresponds to 122-143 (DGEVFWIRLLEEKDYPNKGAIP). Residues 144-164 (VYTGLTTGFCGTVSSFSSVIL) form a helical membrane-spanning segment. The Extracellular portion of the chain corresponds to 165–185 (EAFNKAADTDIGVRHHYPNGA). A helical transmembrane segment spans residues 186–206 (YGIMQFLAVILAQFGLSIMGF). At 207 to 229 (HMGKQFSAVVDNYLPLVTKRIYK) the chain is on the cytoplasmic side. A helical membrane pass occupies residues 230-250 (VLELTSMILGVVLVVITCILI). Over 251–256 (GVKKQG) the chain is Extracellular. The chain crosses the membrane as a helical span at residues 257-279 (SWRSWTFSMLFAPFGALLRYYLS). At 280–290 (KFLNNKVSNFP) the chain is on the cytoplasmic side. A helical transmembrane segment spans residues 291-311 (LGTFTANFLGTLLLAVFTLLA). At 312 to 338 (RGKLPGGKGHIVTNTIALHVLEGLDDG) the chain is on the extracellular side. A helical membrane pass occupies residues 339–359 (FCGGLTTVSTFVVELFGLKTL). Residues 360 to 368 (FSYRYGTIS) are Cytoplasmic-facing. Residues 369–389 (ILVCFAGVVLILGSYNWSVGL) form a helical membrane-spanning segment. Residue Asp-390 is a topological domain, extracellular.

It belongs to the fluoride channel Fluc/FEX (TC 1.A.43) family.

It localises to the cell membrane. The enzyme catalyses fluoride(in) = fluoride(out). Functionally, fluoride channel required for the rapid expulsion of cytoplasmic fluoride. This Candida albicans (strain SC5314 / ATCC MYA-2876) (Yeast) protein is Fluoride export protein 1.